The chain runs to 338 residues: 1-aminocyclopropane-1-carboxylate deaminase (338 aa).

Lys51 bears the N6-(pyridoxal phosphate)lysine mark. Catalysis depends on Ser78, which acts as the Nucleophile.

The protein belongs to the ACC deaminase/D-cysteine desulfhydrase family. In terms of assembly, homotrimer. Pyridoxal 5'-phosphate serves as cofactor.

The enzyme catalyses 1-aminocyclopropane-1-carboxylate + H2O = 2-oxobutanoate + NH4(+). In terms of biological role, catalyzes a cyclopropane ring-opening reaction, the irreversible conversion of 1-aminocyclopropane-1-carboxylate (ACC) to ammonia and alpha-ketobutyrate. Allows growth on ACC as a nitrogen source. In Burkholderia orbicola (strain MC0-3), this protein is 1-aminocyclopropane-1-carboxylate deaminase.